An 852-amino-acid chain; its full sequence is Disease resistance RPP13-like protein 4 (852 aa).

Positions 17–68 (LEEKGRTVSDYRKQLEDLQSELKYMQSFLKDAERQKRTNETLRTLVADLREL) form a coiled coil. ADP contacts are provided by residues Arg149, Val161, 189–196 (GMGGLGKT), Arg297, and Lys363. The NB-ARC domain occupies 164–410 (EGDKRKIKEW…MSSLQLSYDE (247 aa)). LRR repeat units follow at residues 558–581 (CKYLRVLDISKSIFDAPLSEILDE), 585–609 (LQHLACLSLSNTHPLIQFPRSMEDL), 633–657 (FKKLLVLDMTNCGSLECFPKGIGSL), 683–706 (LTNLRKLGLSLTRGDQIEEEELDS), 763–786 (LPMLRYMSICSGNLVKMQEPFWGN), and 798–824 (LSSLSDLDMDWEVLQQSMPYLRTVTAN).

It belongs to the disease resistance NB-LRR family. RPP13 subfamily. Interacts with ZED1/ZRK5. Component of a stable high-order oligomeric complex made of RKS1 and RPP13L4/ZAR1 which recruits ZED1-related kinases (e.g. uridylylated PBL2 and acetylated ZED1/ZRK5) in the presence of ATP and pathogenic bacteria type III secreted effector (T3SE) proteins (e.g. Pseudomonas syringae HopZ1a and HopF2a and Xanthomonas campestris pv. campestris (Xcc) XopAC/AvrAC) to form a wheel-like pentameric resistosome; this complex triggers immunity toward pathogenic bacteria (e.g. X.campestris and P.syringae), especially in vascular tissues. Interacts with RKS1, ZED1/ZRK5, ZRK3, ZRK6 and ZRK15.

The protein localises to the cell membrane. The protein resides in the nucleus. With respect to regulation, exhibits autoinhibition activity. In terms of biological role, CC-NB-LRR receptor-like protein required for recognition of pathogenic bacteria type III effectors (T3E) such as Pseudomonas syringae HopZ1a and HopF2a and Xanthomonas campestris pv. campestris (Xcc) XopAC/AvrAC; this recognition requires ZED1-related kinases (e.g. PBL2, ZRK3 and ZED1/ZRK5). Confers allele-specific recognition and virulence attenuation of HopZ1a. Immunity mediated by RPP13L4/ZAR1 is independent of several genes required by other resistance protein signaling pathways such as NDR1 and RAR1. Together with ZED1/ZRK5, involved in the regulation of the ambient temperature-sensitive intersection of growth and immune response in the absence of pathogens. This chain is Disease resistance RPP13-like protein 4 (RPP13L4), found in Arabidopsis thaliana (Mouse-ear cress).